Reading from the N-terminus, the 412-residue chain is Multidrug resistance protein MdtA (412 aa).

Residues 1 to 21 (MKGSNIRRWGAALAVVIIAGA) form the signal peptide. 2 disordered regions span residues 33 to 53 (GSGA…RHGR) and 389 to 412 (VVTA…GARS).

The protein belongs to the membrane fusion protein (MFP) (TC 8.A.1) family. As to quaternary structure, part of a tripartite efflux system composed of MdtA, MdtB and MdtC.

The protein localises to the cell inner membrane. The polypeptide is Multidrug resistance protein MdtA (Klebsiella pneumoniae subsp. pneumoniae (strain ATCC 700721 / MGH 78578)).